Reading from the N-terminus, the 212-residue chain is Glycerol-3-phosphate acyltransferase (212 aa).

A run of 5 helical transmembrane segments spans residues 3-23, 51-71, 78-98, 115-135, and 139-159; these read ILLA…VIVS, KAAI…VWLA, DVAI…PVFF, AVHP…AFFF, and SLAA…LFGT.

It belongs to the PlsY family. As to quaternary structure, probably interacts with PlsX.

Its subcellular location is the cell inner membrane. It carries out the reaction an acyl phosphate + sn-glycerol 3-phosphate = a 1-acyl-sn-glycero-3-phosphate + phosphate. It functions in the pathway lipid metabolism; phospholipid metabolism. In terms of biological role, catalyzes the transfer of an acyl group from acyl-phosphate (acyl-PO(4)) to glycerol-3-phosphate (G3P) to form lysophosphatidic acid (LPA). This enzyme utilizes acyl-phosphate as fatty acyl donor, but not acyl-CoA or acyl-ACP. The chain is Glycerol-3-phosphate acyltransferase from Burkholderia multivorans (strain ATCC 17616 / 249).